We begin with the raw amino-acid sequence, 501 residues long: Putative glycogen synthase kinase-3 homolog (501 aa).

Residues 33 to 317 (YTDAKVVGNG…PLMGCAHPFF (285 aa)) form the Protein kinase domain. ATP is bound by residues 39-47 (VGNGSFGVV) and K62. D158 serves as the catalytic Proton acceptor. Position 193 is a phosphotyrosine (Y193). Disordered regions lie at residues 355-427 (LLPR…HVAV) and 446-501 (SYAV…EDEN). Basic and acidic residues predominate over residues 381–390 (ESPRKTEDSQ). Composition is skewed to acidic residues over residues 451 to 471 (EDAE…DYDD) and 482 to 501 (DDMD…EDEN).

Belongs to the protein kinase superfamily. CMGC Ser/Thr protein kinase family. GSK-3 subfamily. Post-translationally, phosphorylation on Tyr-193 is necessary for the activity.

The catalysed reaction is L-seryl-[tau protein] + ATP = O-phospho-L-seryl-[tau protein] + ADP + H(+). The enzyme catalyses L-threonyl-[tau protein] + ATP = O-phospho-L-threonyl-[tau protein] + ADP + H(+). This chain is Putative glycogen synthase kinase-3 homolog (gskt), found in Drosophila melanogaster (Fruit fly).